The chain runs to 260 residues: MDDYTREMMDLKTLVTRTLEKKGVLAKIRAELRASVFEAIEEEDRVIENNEGPPPALLGSCNDRARKLHASPSGRLLSALICEYLDWAQLNHTLIVYQPESNLPKDSWKSELRDFNSNNGFELNRNGDSGPLLLDVLEGFLKFESMTQGMGSSSRRDSETESSSSLESRNPPRRSSASDSLPPQRRPVSASQASDRRAGLSTSGYRKDEFNWRQGNQDTHEEVTRASAALENLQLDRKTRNLTSSWRNVRDGTNEEEGRD.

The LisH domain maps to 73–105 (SGRLLSALICEYLDWAQLNHTLIVYQPESNLPK). Disordered regions lie at residues 147 to 224 (TQGM…EEVT) and 236 to 260 (DRKTRNLTSSWRNVRDGTNEEEGRD). A compositionally biased stretch (low complexity) spans 161-175 (ESSSSLESRNPPRRS). A compositionally biased stretch (basic and acidic residues) spans 248–260 (NVRDGTNEEEGRD).

As to quaternary structure, interacts with CEN1, LNG1/TRM2 and LNG2/TRM1 (via C-terminus).

Its subcellular location is the cytoplasm. It is found in the cytoskeleton. Its function is as follows. Involved in the control of the dynamic organization of the cortical cytoskeleton. May play a role in the organization of microtubule arrays at the centrosome through interaction with centrin 1 (CEN1). This chain is Protein TONNEAU 1a (TON1A), found in Arabidopsis thaliana (Mouse-ear cress).